The primary structure comprises 194 residues: Holliday junction branch migration complex subunit RuvA (194 aa).

Positions Met1–Ala61 are domain I. A domain II region spans residues Ser62 to Asn136. Residues Asn136–Glu140 form a flexible linker region. The tract at residues Gln141 to Glu194 is domain III.

The protein belongs to the RuvA family. As to quaternary structure, homotetramer. Forms an RuvA(8)-RuvB(12)-Holliday junction (HJ) complex. HJ DNA is sandwiched between 2 RuvA tetramers; dsDNA enters through RuvA and exits via RuvB. An RuvB hexamer assembles on each DNA strand where it exits the tetramer. Each RuvB hexamer is contacted by two RuvA subunits (via domain III) on 2 adjacent RuvB subunits; this complex drives branch migration. In the full resolvosome a probable DNA-RuvA(4)-RuvB(12)-RuvC(2) complex forms which resolves the HJ.

It localises to the cytoplasm. In terms of biological role, the RuvA-RuvB-RuvC complex processes Holliday junction (HJ) DNA during genetic recombination and DNA repair, while the RuvA-RuvB complex plays an important role in the rescue of blocked DNA replication forks via replication fork reversal (RFR). RuvA specifically binds to HJ cruciform DNA, conferring on it an open structure. The RuvB hexamer acts as an ATP-dependent pump, pulling dsDNA into and through the RuvAB complex. HJ branch migration allows RuvC to scan DNA until it finds its consensus sequence, where it cleaves and resolves the cruciform DNA. This is Holliday junction branch migration complex subunit RuvA from Tropheryma whipplei (strain Twist) (Whipple's bacillus).